Here is a 252-residue protein sequence, read N- to C-terminus: Serine/threonine phosphatase stp (252 aa).

Over residues M1 to D18 the composition is skewed to basic and acidic residues. The disordered stretch occupies residues M1–F23. In terms of domain architecture, PPM-type phosphatase spans H2–R242. Mn(2+) is bound by residues D36, G37, D194, and D233.

It belongs to the PP2C family. The cofactor is Mn(2+).

The protein resides in the cytoplasm. It is found in the membrane. It catalyses the reaction O-phospho-L-seryl-[protein] + H2O = L-seryl-[protein] + phosphate. The catalysed reaction is O-phospho-L-threonyl-[protein] + H2O = L-threonyl-[protein] + phosphate. Its function is as follows. Protein phosphatase that dephosphorylates EF-Tu. The protein is Serine/threonine phosphatase stp (stp) of Listeria welshimeri serovar 6b (strain ATCC 35897 / DSM 20650 / CCUG 15529 / CIP 8149 / NCTC 11857 / SLCC 5334 / V8).